Here is a 477-residue protein sequence, read N- to C-terminus: Ketoisovalerate oxidoreductase subunit VorA (477 aa).

Heterotrimer of the VorA, VorB and VorC subunits.

It catalyses the reaction 3-methyl-2-oxobutanoate + 2 oxidized [2Fe-2S]-[ferredoxin] + CoA = 2-methylpropanoyl-CoA + 2 reduced [2Fe-2S]-[ferredoxin] + CO2 + H(+). This is Ketoisovalerate oxidoreductase subunit VorA (vorA) from Methanothermobacter thermautotrophicus (strain ATCC 29096 / DSM 1053 / JCM 10044 / NBRC 100330 / Delta H) (Methanobacterium thermoautotrophicum).